The sequence spans 385 residues: Putative mitochondrial carrier protein TRV_02148.2 (385 aa).

Solcar repeat units follow at residues Ser24 to Arg124 and Arg130 to Arg210. Helical transmembrane passes span Gly30–Leu47, Ala132–Thr150, Trp184–Leu207, Tyr263–Ile279, and Val294–Leu310.

This sequence belongs to the mitochondrial carrier (TC 2.A.29) family.

The protein resides in the mitochondrion inner membrane. In terms of biological role, may function as a mitochondrial transporter. The polypeptide is Putative mitochondrial carrier protein TRV_02148.2 (Trichophyton verrucosum (strain HKI 0517)).